We begin with the raw amino-acid sequence, 400 residues long: Lysophospholipid transporter LplT (400 aa).

12 helical membrane passes run 19 to 39 (VIVA…ATLA), 53 to 73 (VLQM…GQIA), 91 to 111 (AGAA…LVGI), 139 to 159 (LMEA…GVLA), 164 to 184 (IAAL…NLFI), 195 to 213 (SWRL…VVLW), 227 to 247 (LFWG…PVAL), 257 to 277 (YLNA…AKLV), 281 to 301 (TVSR…IFSL), 304 to 324 (ALLP…FFVV), 352 to 372 (NSAM…GVPA), and 373 to 393 (VAIG…LWIW).

The protein belongs to the major facilitator superfamily. LplT (TC 2.A.1.42) family.

Its subcellular location is the cell inner membrane. Functionally, catalyzes the facilitated diffusion of 2-acyl-glycero-3-phosphoethanolamine (2-acyl-GPE) into the cell. In Salmonella agona (strain SL483), this protein is Lysophospholipid transporter LplT.